A 1378-amino-acid chain; its full sequence is DNA-directed RNA polymerase subunit beta (1378 aa).

Belongs to the RNA polymerase beta chain family. As to quaternary structure, the RNAP catalytic core consists of 2 alpha, 1 beta, 1 beta' and 1 omega subunit. When a sigma factor is associated with the core the holoenzyme is formed, which can initiate transcription.

The catalysed reaction is RNA(n) + a ribonucleoside 5'-triphosphate = RNA(n+1) + diphosphate. Functionally, DNA-dependent RNA polymerase catalyzes the transcription of DNA into RNA using the four ribonucleoside triphosphates as substrates. The sequence is that of DNA-directed RNA polymerase subunit beta from Campylobacter jejuni (strain RM1221).